The primary structure comprises 296 residues: NAD kinase (296 aa).

Residue D73 is the Proton acceptor of the active site. NAD(+) is bound by residues 73–74, K78, 151–152, R178, D180, and 191–196; these read DG, NE, and TAHAMS.

This sequence belongs to the NAD kinase family. A divalent metal cation serves as cofactor.

The protein resides in the cytoplasm. It carries out the reaction NAD(+) + ATP = ADP + NADP(+) + H(+). Its function is as follows. Involved in the regulation of the intracellular balance of NAD and NADP, and is a key enzyme in the biosynthesis of NADP. Catalyzes specifically the phosphorylation on 2'-hydroxyl of the adenosine moiety of NAD to yield NADP. The protein is NAD kinase of Francisella tularensis subsp. tularensis (strain FSC 198).